Here is a 314-residue protein sequence, read N- to C-terminus: tRNA dimethylallyltransferase (314 aa).

Position 13-20 (13-20 (GPTAVGKT)) interacts with ATP. 15 to 20 (TAVGKT) serves as a coordination point for substrate. The interval 38–41 (DSMQ) is interaction with substrate tRNA.

This sequence belongs to the IPP transferase family. Monomer. The cofactor is Mg(2+).

It catalyses the reaction adenosine(37) in tRNA + dimethylallyl diphosphate = N(6)-dimethylallyladenosine(37) in tRNA + diphosphate. Catalyzes the transfer of a dimethylallyl group onto the adenine at position 37 in tRNAs that read codons beginning with uridine, leading to the formation of N6-(dimethylallyl)adenosine (i(6)A). The polypeptide is tRNA dimethylallyltransferase (Bacillus velezensis (strain DSM 23117 / BGSC 10A6 / LMG 26770 / FZB42) (Bacillus amyloliquefaciens subsp. plantarum)).